The primary structure comprises 183 residues: Microfibrillar-associated protein 2 (183 aa).

A signal peptide spans M1–A17. A Pyrrolidone carboxylic acid modification is found at Q18. Residue Q20 forms an Isoglutamyl lysine isopeptide (Gln-Lys) (interchain with K-?) linkage. A sulfotyrosine mark is found at Y47, Y48, and Y50. The ShKT domain occupies C153–C183. Intrachain disulfides connect C153/C183, C160/C176, and C169/C180.

This sequence belongs to the MFAP family. As to quaternary structure, forms a ternary complex with BGN and ELN. Interacts with FBN1 (via N-terminal domain) and FBN2. In terms of processing, O-glycosylated; glycans consist of Gal(beta1-3)GalNAc. Forms intermolecular disulfide bonds either with other MAGP-1 molecules or with other components of the microfibrils. Post-translationally, forms transglutaminase cross-links with tropoelastin.

Its subcellular location is the secreted. The protein localises to the extracellular space. It is found in the extracellular matrix. In terms of biological role, component of the elastin-associated microfibrils. The sequence is that of Microfibrillar-associated protein 2 (MFAP2) from Bos taurus (Bovine).